Reading from the N-terminus, the 267-residue chain is 2-keto-3-deoxy-L-rhamnonate aldolase (267 aa).

Histidine 49 serves as the catalytic Proton acceptor. Residue glutamine 151 coordinates substrate. Glutamate 153 provides a ligand contact to Mg(2+). Residues alanine 178 and aspartate 179 each coordinate substrate. Aspartate 179 serves as a coordination point for Mg(2+).

The protein belongs to the HpcH/HpaI aldolase family. KDR aldolase subfamily. As to quaternary structure, homohexamer. Requires Mg(2+) as cofactor.

The catalysed reaction is 2-dehydro-3-deoxy-L-rhamnonate = (S)-lactaldehyde + pyruvate. In terms of biological role, catalyzes the reversible retro-aldol cleavage of 2-keto-3-deoxy-L-rhamnonate (KDR) to pyruvate and lactaldehyde. The protein is 2-keto-3-deoxy-L-rhamnonate aldolase of Escherichia coli O6:K15:H31 (strain 536 / UPEC).